Consider the following 249-residue polypeptide: Large ribosomal subunit protein uL16m (249 aa).

The protein belongs to the universal ribosomal protein uL16 family. Component of the mitochondrial large ribosomal subunit (mt-LSU). Mature N.crassa 74S mitochondrial ribosomes consist of a small (37S) and a large (54S) subunit. The 37S small subunit contains a 16S ribosomal RNA (16S mt-rRNA) and 32 different proteins. The 54S large subunit contains a 23S rRNA (23S mt-rRNA) and 42 different proteins.

The protein localises to the mitochondrion. Its function is as follows. Component of the mitochondrial ribosome (mitoribosome), a dedicated translation machinery responsible for the synthesis of mitochondrial genome-encoded proteins, including at least some of the essential transmembrane subunits of the mitochondrial respiratory chain. The mitoribosomes are attached to the mitochondrial inner membrane and translation products are cotranslationally integrated into the membrane. The sequence is that of Large ribosomal subunit protein uL16m (mrpl16) from Neurospora crassa (strain ATCC 24698 / 74-OR23-1A / CBS 708.71 / DSM 1257 / FGSC 987).